Reading from the N-terminus, the 89-residue chain is Small ribosomal subunit protein bS20 (89 aa).

Disordered regions lie at residues 1-25 (MANIKSAIKRAKTSEKRRAHNASMK) and 69-89 (KNAASRQKSRLAKKLNSIQAS). Residues 7 to 20 (AIKRAKTSEKRRAH) are compositionally biased toward basic residues.

This sequence belongs to the bacterial ribosomal protein bS20 family.

Functionally, binds directly to 16S ribosomal RNA. In Geobacillus kaustophilus (strain HTA426), this protein is Small ribosomal subunit protein bS20.